The primary structure comprises 433 residues: Protein FAM98B (433 aa).

Residues 303 to 433 are disordered; that stretch reads GRVPDRGGRP…GGGGGGYRRY (131 aa). A compositionally biased stretch (basic and acidic residues) spans 305–314; sequence VPDRGGRPNE. Residues 331-433 show a composition bias toward gly residues; that stretch reads GGGGRGGWGG…GGGGGGYRRY (103 aa).

Belongs to the FAM98 family. In terms of assembly, homodimer. Component of the tRNA-splicing ligase complex. Interacts with FAM98A. As to expression, expressed strongly in colorectal cancer tissues compared to wild-type colon samples (at protein level). Expressed strongly in colorectal cancer tissues compared to wild-type colon samples.

It is found in the nucleus. The protein localises to the cytoplasm. Its function is as follows. Positively stimulates PRMT1-induced protein arginine dimethylated arginine methylation. The chain is Protein FAM98B (FAM98B) from Homo sapiens (Human).